The sequence spans 192 residues: Ferritin-like protein (192 aa).

H44, E48, and H102 together coordinate Fe(3+). Residues 143 to 179 (RFDHDYADPHAHHDEHRDHLADMPSAGSSHEEVQPVA) are linker. The span at 149–163 (ADPHAHHDEHRDHLA) shows a compositional bias: basic and acidic residues. Residues 149–192 (ADPHAHHDEHRDHLADMPSAGSSHEEVQPVAHKKKGFTVGSLIQ) form a disordered region. The tract at residues 180–192 (HKKKGFTVGSLIQ) is targeting peptide.

As to quaternary structure, homodimer, with 2 Fe atoms bound at the subunit interface (without encapsulin), probably also a dimer when encapsulated. 42 electron-dense accretions can be seen inside the nanocompartment which are probably this cargo protein, although perhaps up to one cargo dimer can be bound per shell protein.

Its subcellular location is the encapsulin nanocompartment. It carries out the reaction 4 Fe(2+) + O2 + 4 H(+) = 4 Fe(3+) + 2 H2O. In terms of biological role, cargo protein of a type 1 encapsulin nanocompartment. A ferritin-like iron-binding protein probably involved in iron mineralization in the encapsulin nanocompartment. Has ferroxidase activity even when encapsulated, the rate is probably controlled by the rate of Fe flux across the nanocompartment pores. Part of the iron-mineralizing encapsulin-associated Firmicute (IMEF) system. 2 different cargo proteins have been identified (IMEF and Fer); when both are expressed in E.coli with the shell protein only IMEF is detected within the nanocompartment. E.coli expressing all 3 genes stores the largest amount of iron and is protected from Fe/H2O2-induced oxidative stress. This chain is Ferritin-like protein, found in Bacillus thermotolerans (Quasibacillus thermotolerans).